Here is a 599-residue protein sequence, read N- to C-terminus: Beta-(1--&gt;2)glucan export ATP-binding/permease protein NdvA (599 aa).

The 281-residue stretch at T21–T301 folds into the ABC transmembrane type-1 domain. 5 helical membrane-spanning segments follow: residues I22–F42, I55–F75, M156–V176, M248–G268, and I276–I296. One can recognise an ABC transporter domain in the interval I335 to A569. Residue G368 to T375 coordinates ATP.

Belongs to the ABC transporter superfamily. Beta-(1--&gt;2)glucan exporter (TC 3.A.1.108.1) family. Homodimer.

The protein localises to the cell inner membrane. The enzyme catalyses [(1-&gt;2)-beta-D-glucosyl](n)(in) + ATP + H2O = [(1-&gt;2)-beta-D-glucosyl](n)(out) + ADP + phosphate + H(+). Its function is as follows. Involved in beta-(1--&gt;2)glucan export. Transmembrane domains (TMD) form a pore in the inner membrane and the ATP-binding domain (NBD) is responsible for energy generation. The polypeptide is Beta-(1--&gt;2)glucan export ATP-binding/permease protein NdvA (Brucella melitensis biotype 1 (strain ATCC 23456 / CCUG 17765 / NCTC 10094 / 16M)).